A 935-amino-acid chain; its full sequence is UvrABC system protein A (935 aa).

An ATP-binding site is contributed by 31 to 38 (GLSGSGKS). A C4-type zinc finger spans residues 254–281 (CFKCKMSFEELEPLSFSFNSPKGACESC). ABC transporter domains are found at residues 310-579 (IFGY…NNHS) and 599-931 (KEKH…KFLA). 631-638 (GVSGSGKS) contacts ATP. The segment at 731 to 757 (CEKCQGDGDIKIEMHFLPDVLVQCDSC) adopts a C4-type zinc-finger fold.

It belongs to the ABC transporter superfamily. UvrA family. In terms of assembly, forms a heterotetramer with UvrB during the search for lesions.

The protein localises to the cytoplasm. Its function is as follows. The UvrABC repair system catalyzes the recognition and processing of DNA lesions. UvrA is an ATPase and a DNA-binding protein. A damage recognition complex composed of 2 UvrA and 2 UvrB subunits scans DNA for abnormalities. When the presence of a lesion has been verified by UvrB, the UvrA molecules dissociate. This Helicobacter pylori (strain ATCC 700392 / 26695) (Campylobacter pylori) protein is UvrABC system protein A.